The sequence spans 315 residues: MGPPKIGQTVVVEVPSTTANIGPGFDCLGAALDLSNQFTIKRIEGNAERFELIMESTEGNHLRGGPENLFYRAAQRVWRTAGIEPVALEARVKLAVPPARGLGSSATAIVAGLVGANALAGYPLPKEKLLELAIDIEGHPDNVVPSLIGGLCVTAKTASDRWRVVRCDWDKSIKAVVAIPSIRLSTSEARRVMPENIPVNDAVINLGALTLLLQGLRTGNEDLITDGMHDKLHEPYRWGLIKGGLEVREAAKAAGALGCAISGAGPSILALCKATKGREVSVAMVKAWEAAGVASRAPLMSLQLTGSECISNTFG.

97 to 107 is an ATP binding site; that stretch reads PPARGLGSSAT.

The protein belongs to the GHMP kinase family. Homoserine kinase subfamily.

It is found in the cytoplasm. The catalysed reaction is L-homoserine + ATP = O-phospho-L-homoserine + ADP + H(+). It participates in amino-acid biosynthesis; L-threonine biosynthesis; L-threonine from L-aspartate: step 4/5. Its function is as follows. Catalyzes the ATP-dependent phosphorylation of L-homoserine to L-homoserine phosphate. This chain is Homoserine kinase, found in Prochlorococcus marinus (strain NATL2A).